A 486-amino-acid polypeptide reads, in one-letter code: MTFIEGKTEKWEYVIGLEIHAQIKSNAKLFSSASTEFGSSPNSQVELLDAAMPGSLPVLNEFCVHQAIKTALGINAKINKLSIFDRKNYFYADLPAGYQISQFYHPIAQGGWIEILDENGNIKRIQINRLHIEQDTGKSTHDQSDTYSYIDLNRSGIALMEIVSEPDISSPMQAAEYIKKLRAILRYLDSCNGDMEKGSLRCDANISVRKPNSELGTKCEIKNLNSIKSIVRALEFEGQRQVNILESGGTVKQESLLFDATLGKTFPMRSKENATDYRYFPDPDLPPIILDQSLIDNIASSLPELPDAKIRRYINEIKLSDYNAQVLAADKDISCFFEEVIKTANPLLSANWILSELFGLMNKDGITINECKITANHFSELIQLISSKAISSKIAKTVLKEMFDSGKSPKIIMQEKNIQQISDPNQIADIIDDVLKDNYQSVVSYRNGKDRLFGFFVGQVMKKTAGNANPALINEILHTKLKQFQI.

It belongs to the GatB/GatE family. GatB subfamily. In terms of assembly, heterotrimer of A, B and C subunits.

The enzyme catalyses L-glutamyl-tRNA(Gln) + L-glutamine + ATP + H2O = L-glutaminyl-tRNA(Gln) + L-glutamate + ADP + phosphate + H(+). It carries out the reaction L-aspartyl-tRNA(Asn) + L-glutamine + ATP + H2O = L-asparaginyl-tRNA(Asn) + L-glutamate + ADP + phosphate + 2 H(+). Functionally, allows the formation of correctly charged Asn-tRNA(Asn) or Gln-tRNA(Gln) through the transamidation of misacylated Asp-tRNA(Asn) or Glu-tRNA(Gln) in organisms which lack either or both of asparaginyl-tRNA or glutaminyl-tRNA synthetases. The reaction takes place in the presence of glutamine and ATP through an activated phospho-Asp-tRNA(Asn) or phospho-Glu-tRNA(Gln). The chain is Aspartyl/glutamyl-tRNA(Asn/Gln) amidotransferase subunit B from Orientia tsutsugamushi (strain Ikeda) (Rickettsia tsutsugamushi).